A 124-amino-acid chain; its full sequence is Ragulator complex protein LAMTOR3 (124 aa).

Residues 57–70 are required for interaction with LAMTOR2; sequence TDQGSKLGLSKNKS.

This sequence belongs to the LAMTOR3 family. In terms of assembly, part of the Ragulator complex composed of LAMTOR1, LAMTOR2, LAMTOR3, LAMTOR4 and LAMTOR5. LAMTOR4 and LAMTOR5 form a heterodimer that interacts, through LAMTOR1, with a LAMTOR2, LAMTOR3 heterodimer. Interacts with LAMTOR1 and LAMTOR2; the interaction is direct. The Ragulator complex interacts with both the mTORC1 complex and heterodimers constituted of the Rag GTPases RagA/RRAGA, RagB/RRAGB, RagC/RRAGC and RagD/RRAGD; regulated by amino acid availability. The Ragulator complex interacts with SLC38A9; the probable amino acid sensor. Component of the lysosomal folliculin complex (LFC), composed of FLCN, FNIP1 (or FNIP2), RagA/RRAGA or RagB/RRAGB GDP-bound, RagC/RRAGC or RagD/RRAGD GTP-bound, and Ragulator. Interacts with MAP2K1/MEK1 and MAPK2. Interacts with MORG1.

The protein localises to the late endosome membrane. Functionally, as part of the Ragulator complex it is involved in amino acid sensing and activation of mTORC1, a signaling complex promoting cell growth in response to growth factors, energy levels, and amino acids. Activated by amino acids through a mechanism involving the lysosomal V-ATPase, the Ragulator plays a dual role for the small GTPases Rag (RagA/RRAGA, RagB/RRAGB, RagC/RRAGC and/or RagD/RRAGD): it (1) acts as a guanine nucleotide exchange factor (GEF), activating the small GTPases Rag and (2) mediates recruitment of Rag GTPases to the lysosome membrane. Activated Ragulator and Rag GTPases function as a scaffold recruiting mTORC1 to lysosomes where it is in turn activated. Adapter protein that enhances the efficiency of the MAP kinase cascade facilitating the activation of MAPK2. The chain is Ragulator complex protein LAMTOR3 from Homo sapiens (Human).